The sequence spans 696 residues: DNA ligase (696 aa).

Residues 43–47 (DGEFD), 92–93 (SL), and glutamate 122 contribute to the NAD(+) site. Lysine 124 acts as the N6-AMP-lysine intermediate in catalysis. 4 residues coordinate NAD(+): arginine 145, glutamate 185, lysine 301, and lysine 325. Zn(2+)-binding residues include cysteine 419, cysteine 422, cysteine 438, and cysteine 444. The BRCT domain occupies 608-696 (SIPRNLEGLS…GPDAVAESGV (89 aa)).

Belongs to the NAD-dependent DNA ligase family. LigA subfamily. Mg(2+) serves as cofactor. Mn(2+) is required as a cofactor.

The enzyme catalyses NAD(+) + (deoxyribonucleotide)n-3'-hydroxyl + 5'-phospho-(deoxyribonucleotide)m = (deoxyribonucleotide)n+m + AMP + beta-nicotinamide D-nucleotide.. Its function is as follows. DNA ligase that catalyzes the formation of phosphodiester linkages between 5'-phosphoryl and 3'-hydroxyl groups in double-stranded DNA using NAD as a coenzyme and as the energy source for the reaction. It is essential for DNA replication and repair of damaged DNA. This Rhodococcus jostii (strain RHA1) protein is DNA ligase.